The following is a 775-amino-acid chain: Kinesin-like protein KIF3B (775 aa).

The Kinesin motor domain maps to 9–341 (SVKVVVRCRP…LRYANRAKNI (333 aa)). Residue 97 to 104 (GQTGTGKT) participates in ATP binding. A disordered region spans residues 372–419 (KRSGRKRRRRRRRRVGEGGEEFEDGEDEEDDDDDDEDEEEGVDADKNI). A compositionally biased stretch (basic residues) spans 374–385 (SGRKRRRRRRRR). Positions 389–413 (GGEEFEDGEDEEDDDDDDEDEEEGV) are enriched in acidic residues. Positions 501 to 591 (LELKRQEIAE…QNELTRELKL (91 aa)) form a coiled coil. A disordered region spans residues 716 to 775 (FHASLGSSPGLSASAAGFSKKPKSGRPKTGKKVSTPTSAHSPLSGSGSPLYPQSRGLVPK). Residues 718 to 734 (ASLGSSPGLSASAAGFS) show a composition bias toward low complexity. Residues 735 to 746 (KKPKSGRPKTGK) show a composition bias toward basic residues. Positions 756-765 (SPLSGSGSPL) are enriched in low complexity.

Belongs to the TRAFAC class myosin-kinesin ATPase superfamily. Kinesin family. As to quaternary structure, heterodimer of KIF3A and KIF3B. KIF3A/KIF3B heterodimer interacts with KIFAP3 forming a heterotrimeric (KIF3A/KIF3B/KIFAP3) complex.

Its subcellular location is the cytoplasm. The protein localises to the cytoskeleton. It localises to the cell projection. The protein resides in the cilium. It is found in the dendritic spine. Functionally, microtubule-based molecular motor that transport intracellular cargos, such as vesicles, organelles and protein complexes. Uses ATP hydrolysis to generate force to bind and move along the microtubule. Plays a role in cilia formation. Required for photoreceptor development. The polypeptide is Kinesin-like protein KIF3B (Danio rerio (Zebrafish)).